The chain runs to 127 residues: Large-conductance mechanosensitive channel (127 aa).

2 helical membrane-spanning segments follow: residues Val-14–Leu-34 and Gly-69–Val-89.

It belongs to the MscL family. Homopentamer.

Its subcellular location is the cell membrane. Functionally, channel that opens in response to stretch forces in the membrane lipid bilayer. May participate in the regulation of osmotic pressure changes within the cell. The protein is Large-conductance mechanosensitive channel of Leuconostoc mesenteroides subsp. mesenteroides (strain ATCC 8293 / DSM 20343 / BCRC 11652 / CCM 1803 / JCM 6124 / NCDO 523 / NBRC 100496 / NCIMB 8023 / NCTC 12954 / NRRL B-1118 / 37Y).